Consider the following 142-residue polypeptide: Inner membrane protein YqaA (142 aa).

At methionine 1–serine 2 the chain is on the cytoplasmic side. Residues glutamate 3–glycine 23 traverse the membrane as a helical segment. At asparagine 24–glutamate 26 the chain is on the periplasmic side. A helical membrane pass occupies residues valine 27 to alanine 47. Residues threonine 48–alanine 86 lie on the Cytoplasmic side of the membrane. A helical transmembrane segment spans residues valine 87–tryptophan 107. At methionine 108–histidine 142 the chain is on the periplasmic side.

The protein to H.influenzae HI_0489.

It localises to the cell inner membrane. In Escherichia coli (strain K12), this protein is Inner membrane protein YqaA (yqaA).